A 390-amino-acid chain; its full sequence is Transforming growth factor beta-1 proprotein (390 aa).

Residues 1–29 (MPPSGLRLLPLLLPLLWLLMLTPGRPVAG) form the signal peptide. The straightjacket domain stretch occupies residues 30-74 (LSTCKTIDMELVKRKRIEAIRGQILSKLRLASPPSQGDVPPGPLP). An arm domain region spans residues 75 to 271 (EAILALYNST…ATPLERAQHL (197 aa)). N82, N136, and N176 each carry an N-linked (GlcNAc...) asparagine glycan. The tract at residues 226–252 (DSKDNTLQVDINGFSSGRRGDLATIHG) is bowtie tail. The Cell attachment site motif lies at 244 to 246 (RGD). 4 cysteine pairs are disulfide-bonded: C285/C294, C293/C356, C322/C387, and C326/C389.

The protein belongs to the TGF-beta family. In terms of assembly, homodimer; disulfide-linked. Interacts with the serine proteases, HTRA1 and HTRA3: the interaction with either inhibits TGFB1-mediated signaling and the HTRA protease activity is required for this inhibition. May interact with THSD4; this interaction may lead to sequestration by FBN1 microfibril assembly and attenuation of TGFB signaling. Interacts with CD109, DPT and ASPN. Interacts with EFEMP2. Interacts with TSKU; the interaction contributes to regulation of the hair cycle. Interacts with TGFBR3. Homodimer; disulfide-linked. Interacts with transforming growth factor beta-1 (TGF-beta-1) chain; interaction is non-covalent and maintains TGF-beta-1 in a latent state; each latency-associated peptide (LAP) monomer interacts with TGF-beta-1 in the other monomer. Interacts with LTBP1; leading to regulation of TGF-beta-1 activation. Interacts with LRRC32/GARP; leading to regulation of TGF-beta-1 activation on the surface of activated regulatory T-cells (Tregs). Interacts with LRRC33/NRROS; leading to regulation of TGF-beta-1 activation in macrophages and microglia. Interacts (via cell attachment site) with integrins ITGAV and ITGB6 (ITGAV:ITGB6), leading to release of the active TGF-beta-1. Interacts with NREP; the interaction results in a decrease in TGFB1 autoinduction. Interacts with HSP90AB1; inhibits latent TGFB1 activation. As to quaternary structure, homodimer; disulfide-linked. Interacts with TGF-beta receptors (TGFBR1 and TGFBR2), leading to signal transduction. Interacts with EFEMP2. In terms of processing, transforming growth factor beta-1 proprotein: The precursor proprotein is cleaved in the Golgi apparatus by FURIN to form Transforming growth factor beta-1 (TGF-beta-1) and Latency-associated peptide (LAP) chains, which remain non-covalently linked, rendering TGF-beta-1 inactive. N-glycosylated. Deglycosylation leads to activation of Transforming growth factor beta-1 (TGF-beta-1); mechanisms triggering deglycosylation-driven activation of TGF-beta-1 are however unclear.

The protein resides in the secreted. It is found in the extracellular space. It localises to the extracellular matrix. In terms of biological role, transforming growth factor beta-1 proprotein: Precursor of the Latency-associated peptide (LAP) and Transforming growth factor beta-1 (TGF-beta-1) chains, which constitute the regulatory and active subunit of TGF-beta-1, respectively. Functionally, required to maintain the Transforming growth factor beta-1 (TGF-beta-1) chain in a latent state during storage in extracellular matrix. Associates non-covalently with TGF-beta-1 and regulates its activation via interaction with 'milieu molecules', such as LTBP1, LRRC32/GARP and LRRC33/NRROS, that control activation of TGF-beta-1. Interaction with LRRC33/NRROS regulates activation of TGF-beta-1 in macrophages and microglia. Interaction with LRRC32/GARP controls activation of TGF-beta-1 on the surface of activated regulatory T-cells (Tregs). Interaction with integrins (ITGAV:ITGB6 or ITGAV:ITGB8) results in distortion of the Latency-associated peptide chain and subsequent release of the active TGF-beta-1. Its function is as follows. Multifunctional protein that regulates the growth and differentiation of various cell types and is involved in various processes, such as normal development, immune function, microglia function and responses to neurodegeneration. Activation into mature form follows different steps: following cleavage of the proprotein in the Golgi apparatus, Latency-associated peptide (LAP) and Transforming growth factor beta-1 (TGF-beta-1) chains remain non-covalently linked rendering TGF-beta-1 inactive during storage in extracellular matrix. At the same time, LAP chain interacts with 'milieu molecules', such as LTBP1, LRRC32/GARP and LRRC33/NRROS that control activation of TGF-beta-1 and maintain it in a latent state during storage in extracellular milieus. TGF-beta-1 is released from LAP by integrins (ITGAV:ITGB6 or ITGAV:ITGB8): integrin-binding to LAP stabilizes an alternative conformation of the LAP bowtie tail and results in distortion of the LAP chain and subsequent release of the active TGF-beta-1. Once activated following release of LAP, TGF-beta-1 acts by binding to TGF-beta receptors (TGFBR1 and TGFBR2), which transduce signal. While expressed by many cells types, TGF-beta-1 only has a very localized range of action within cell environment thanks to fine regulation of its activation by Latency-associated peptide chain (LAP) and 'milieu molecules'. Plays an important role in bone remodeling: acts as a potent stimulator of osteoblastic bone formation, causing chemotaxis, proliferation and differentiation in committed osteoblasts. Can promote either T-helper 17 cells (Th17) or regulatory T-cells (Treg) lineage differentiation in a concentration-dependent manner. At high concentrations, leads to FOXP3-mediated suppression of RORC and down-regulation of IL-17 expression, favoring Treg cell development. At low concentrations in concert with IL-6 and IL-21, leads to expression of the IL-17 and IL-23 receptors, favoring differentiation to Th17 cells. Stimulates sustained production of collagen through the activation of CREB3L1 by regulated intramembrane proteolysis (RIP). Mediates SMAD2/3 activation by inducing its phosphorylation and subsequent translocation to the nucleus. Positively regulates odontoblastic differentiation in dental papilla cells, via promotion of IPO7-mediated translocation of phosphorylated SMAD2 to the nucleus and subsequent transcription of target genes. Can induce epithelial-to-mesenchymal transition (EMT) and cell migration in various cell types. This is Transforming growth factor beta-1 proprotein (TGFB1) from Bos taurus (Bovine).